Here is a 341-residue protein sequence, read N- to C-terminus: Glycerol-3-phosphate dehydrogenase [NAD(P)+] (341 aa).

Ser-15, Trp-16, Arg-36, and Lys-110 together coordinate NADPH. Sn-glycerol 3-phosphate contacts are provided by Lys-110, Gly-139, and Ser-141. Ala-143 provides a ligand contact to NADPH. Sn-glycerol 3-phosphate contacts are provided by Lys-194, Asp-247, Ser-257, Arg-258, and Asn-259. Lys-194 (proton acceptor) is an active-site residue. Residue Arg-258 participates in NADPH binding. NADPH is bound by residues Val-282 and Glu-284.

This sequence belongs to the NAD-dependent glycerol-3-phosphate dehydrogenase family.

The protein resides in the cytoplasm. The catalysed reaction is sn-glycerol 3-phosphate + NAD(+) = dihydroxyacetone phosphate + NADH + H(+). The enzyme catalyses sn-glycerol 3-phosphate + NADP(+) = dihydroxyacetone phosphate + NADPH + H(+). It participates in membrane lipid metabolism; glycerophospholipid metabolism. Catalyzes the reduction of the glycolytic intermediate dihydroxyacetone phosphate (DHAP) to sn-glycerol 3-phosphate (G3P), the key precursor for phospholipid synthesis. This chain is Glycerol-3-phosphate dehydrogenase [NAD(P)+], found in Xanthomonas euvesicatoria pv. vesicatoria (strain 85-10) (Xanthomonas campestris pv. vesicatoria).